The following is a 115-amino-acid chain: uncharacterized protein (115 aa).

One can recognise an HTH arsR-type domain in the interval 1 to 91 (MTEYNANSIR…SELEGFKNVS (91 aa)). A DNA-binding region (H-T-H motif) is located at residues 30-53 (ASLISHTLLLSYATVLRHLRILND).

In terms of biological role, essential for virus function. This is an uncharacterized protein from Saccharolobus solfataricus (Sulfolobus solfataricus).